The primary structure comprises 313 residues: Olfactory receptor 56A5 (313 aa).

Over 1 to 33 (MTLPSNNSTSPVFEFFLICFPSFQSWQHWLSLP) the chain is Extracellular. N-linked (GlcNAc...) asparagine glycosylation is found at Asn-6 and Asn-7. The chain crosses the membrane as a helical span at residues 34 to 54 (LSLLFLLAMGANATLLITIYL). Over 55–67 (EASLHQPLYYLLS) the chain is Cytoplasmic. The chain crosses the membrane as a helical span at residues 68–88 (LLSLLDIVLCLTVIPKVLAIF). Residues 89–100 (WFDLRSISFPAC) are Extracellular-facing. Residues Cys-100 and Cys-182 are joined by a disulfide bond. The chain crosses the membrane as a helical span at residues 101-121 (FLQVFIMNSFLTMESCTFMIM). Residues 122-146 (AYDRYVAICKPLQYSSIITDQFVAR) lie on the Cytoplasmic side of the membrane. Residues 147–167 (AAIFVVARNGLLTMPIPILSS) form a helical membrane-spanning segment. Residues 168–203 (RLRYCAGHIIKNCICTNVSVSKLSCDDITLNQSYQF) lie on the Extracellular side of the membrane. 2 N-linked (GlcNAc...) asparagine glycosylation sites follow: Asn-184 and Asn-198. The chain crosses the membrane as a helical span at residues 204–224 (VIGWTLLGSDLILIVLSYFFI). Topologically, residues 225–246 (LKTVLRIKGEGDMAKALGTCGS) are cytoplasmic. The chain crosses the membrane as a helical span at residues 247 to 267 (HFILILFFTTVLLVLVITNLA). The Extracellular segment spans residues 268–276 (RKRIPPDVP). The chain crosses the membrane as a helical span at residues 277-297 (ILLNILHHLIPPALNPIVYGV). The Cytoplasmic segment spans residues 298-313 (RTKEIKQGIQNLLRRL).

It belongs to the G-protein coupled receptor 1 family.

The protein resides in the cell membrane. Functionally, odorant receptor. The protein is Olfactory receptor 56A5 (OR56A5) of Homo sapiens (Human).